Here is a 484-residue protein sequence, read N- to C-terminus: MTVRVRIAPSPTGNLHIGTARTAVFNWLFAHHHQGQFILRVEDTDRERSRAEYTENIKSGLAWLGLTWDEGPFFQTQRLDLYRQGIQTLLDKGFAYRCYCTPEELEQMREAQKAQNQAPRYDNRHRHLTEEQRQGLEAQGRKPVIRFIIDDDREIVWHDLIRGKMTWKGSDLGGDMVIARIADNPDQPFGQPLYNLAVVVDDMDMKITHVIRGEDHIANTAKQILLYEALGATVPEFAHTPLILNQEGRKLSKRDGVTSIDDFRKMGFLPQALANYMTLLGWTPPDSTQEIFTLTEAAQQFSLERVNKAGAKFDWDKLDWINSQYVHKMSGEELVDLLVPYWQEAGYPINIDSDRPWLEKMATLIGPSLTRLSDAAKESVLLFGGRVDYSEEAIAQMKQDGVKDVLQAVVEKIQESSQLTEDEAKDTIKQVTKTFKVKKGLVMRSLRAGLMGELHGPDLIQSWLLLHEKGWDKTRLTHGLSLVE.

The short motif at 9–19 is the 'HIGH' region element; it reads PSPTGNLHIGT. Cys98, Cys100, His125, and His127 together coordinate Zn(2+). Residues 250 to 254 carry the 'KMSKS' region motif; the sequence is KLSKR. Lys253 lines the ATP pocket.

This sequence belongs to the class-I aminoacyl-tRNA synthetase family. Glutamate--tRNA ligase type 1 subfamily. Monomer. Requires Zn(2+) as cofactor.

It localises to the cytoplasm. It catalyses the reaction tRNA(Glu) + L-glutamate + ATP = L-glutamyl-tRNA(Glu) + AMP + diphosphate. Functionally, catalyzes the attachment of glutamate to tRNA(Glu) in a two-step reaction: glutamate is first activated by ATP to form Glu-AMP and then transferred to the acceptor end of tRNA(Glu). In Crocosphaera subtropica (strain ATCC 51142 / BH68) (Cyanothece sp. (strain ATCC 51142)), this protein is Glutamate--tRNA ligase.